Here is an 83-residue protein sequence, read N- to C-terminus: Kunitz-type serine protease inhibitor PILP-2 (83 aa).

Positions 1 to 24 are cleaved as a signal peptide; the sequence is MSSGGLLLLLGLLTLWMELTPVSS. The 51-residue stretch at 31–81 folds into the BPTI/Kunitz inhibitor domain; that stretch reads CNLLPEPGRCNAIVRAFYYNSRPRKCLEFPYGGCGGNANNFKTIEECQRTC. 3 disulfide bridges follow: Cys-31-Cys-81, Cys-40-Cys-64, and Cys-56-Cys-77.

Belongs to the venom Kunitz-type family. As to expression, expressed by the venom gland.

The protein resides in the secreted. Functionally, shows weak binding and inhibition of MMP-2 and shows an activity in inhibiting migration and invasion of neuroblastoma. This chain is Kunitz-type serine protease inhibitor PILP-2, found in Bungarus multicinctus (Many-banded krait).